The sequence spans 391 residues: MGYPVIVEATRSPIGKRNGWLSGLHATELLGAVQKAVVDKAGIQSGLHAGDVEQVIGGCVTQFGEQSNNISRVAWLTAGLPEHVGATTVDCQCGSGQQANHLIAGLIAAGAIDVGIACGIEAMSRVGLGANAGPDRSLIRAQSWDIDLPNQFEAAERIAKRRGITREDVDVFGLESQRRAQRAWAEGRFDREISPIQAPVLDEQNQPTGERRLVFRDQGLRETTMAGLGELKPVLEGGIHTAGTSSQISDGAAAVLWMDEAVARAHGLTPRARIVAQALVGAEPYYHLDGPVQSTAKVLEKAGMKIGDIDIVEINEAFASVVLSWARVHEPDMDRVNVNGGAIALGHPVGCTGSRLITTALHELERTDQSLALITMCAGGALSTGTIIERI.

Cysteine 93 acts as the Acyl-thioester intermediate in catalysis. Residues glutamine 151, 221 to 223 (RET), and serine 246 each bind CoA. Residues histidine 347 and cysteine 377 each act as proton acceptor in the active site. Residue glycine 379 participates in substrate binding.

The protein belongs to the thiolase-like superfamily. Thiolase family. In terms of assembly, dimer of dimers.

The enzyme catalyses an acyl-CoA + acetyl-CoA = a 3-oxoacyl-CoA + CoA. The catalysed reaction is 3-oxochol-4-en-22-oyl-CoA + acetyl-CoA = 3,22-dioxochol-4-en-24-oyl-CoA + CoA. It participates in steroid metabolism; cholesterol degradation. In terms of biological role, involved in the beta-oxidation of the cholesterol side chain. It is important for utilization of cholesterol as a sole carbon source in vitro and for full virulence in the chronic stage of mouse lung infection. Catalyzes the thiolysis of 3,22-dioxochol-4-en-24-oyl-CoA to yield 3-oxo-4-pregnene-20-carboxyl-CoA (3-OPC-CoA) and acetyl-CoA. Also able to use acetoacetyl-CoA (AcAcCoA) as substrate. In Mycobacterium tuberculosis (strain ATCC 25618 / H37Rv), this protein is Steroid 3-ketoacyl-CoA thiolase (fadA5).